The primary structure comprises 318 residues: MGKAAKKKYSGATSSKQVSAEKHLSSVFKFNTDLGQHILKNPLVAQGIVDKAQIRPSDVVLEVGPGTGNLTVRILEQAKNVVAVEMDPRMAAELTKRVRGTPVEKKLEIMLGDFMKTELPYFDICISNTPYQISSPLVFKLINQPRPPRVSILMFQREFALRLLARPGDSLYCRLSANVQMWANVTHIMKVGKNNFRPPPQVESSVVRLEIKNPRPQVDYNEWDGLLRIVFVRKNRTISAGFKSTTVMDILEKNYKTFLAMNNEMVDDTKGSMHDVVKEKIDTVLKETDLGDKRAGKCDQNDFLRLLYAFHQVGIHFS.

S-adenosyl-L-methionine contacts are provided by histidine 37, leucine 39, glycine 64, glutamate 85, aspartate 113, and asparagine 128.

Belongs to the class I-like SAM-binding methyltransferase superfamily. rRNA adenine N(6)-methyltransferase family.

Its subcellular location is the cytoplasm. The protein resides in the nucleus. The protein localises to the nucleolus. It catalyses the reaction adenosine(1779)/adenosine(1780) in 18S rRNA + 4 S-adenosyl-L-methionine = N(6)-dimethyladenosine(1779)/N(6)-dimethyladenosine(1780) in 18S rRNA + 4 S-adenosyl-L-homocysteine + 4 H(+). Specifically dimethylates two adjacent adenosines in the loop of a conserved hairpin near the 3'-end of 18S rRNA in the 40S particle. The chain is Dimethyladenosine transferase from Saccharomyces cerevisiae (strain ATCC 204508 / S288c) (Baker's yeast).